The following is a 223-amino-acid chain: Retbindin (223 aa).

A signal peptide spans 1–30 (MANRGHTQPRALAWALGLTLVWILLGACGG). Cystine bridges form between Cys-73–Cys-143, Cys-80–Cys-120, Cys-113–Cys-157, and Cys-126–Cys-139.

Belongs to the folate receptor family. Post-translationally, not N-glycosylated.

The protein localises to the secreted. It localises to the extracellular space. Its subcellular location is the extracellular matrix. The protein resides in the interphotoreceptor matrix. It is found in the cell membrane. Riboflavin-binding protein which might have a role in retinal flavin transport. The polypeptide is Retbindin (RTBDN) (Canis lupus familiaris (Dog)).